We begin with the raw amino-acid sequence, 285 residues long: Nucleotide-binding protein NTHI1314 (285 aa).

Glycine 8–serine 15 is a binding site for ATP. Aspartate 56–asparagine 59 is a binding site for GTP.

It belongs to the RapZ-like family.

Displays ATPase and GTPase activities. The polypeptide is Nucleotide-binding protein NTHI1314 (Haemophilus influenzae (strain 86-028NP)).